The chain runs to 802 residues: Sucrose synthase 1 (802 aa).

The GT-B glycosyltransferase stretch occupies residues 272 to 749 (MMFNVVILSP…GLQRIYEKYT (478 aa)).

It belongs to the glycosyltransferase 1 family. Plant sucrose synthase subfamily.

The enzyme catalyses an NDP-alpha-D-glucose + D-fructose = a ribonucleoside 5'-diphosphate + sucrose + H(+). Functionally, sucrose-cleaving enzyme that provides UDP-glucose and fructose for various metabolic pathways. Most active in the sink tissues where it is responsible for the breakdown of the arriving sucrose. The polypeptide is Sucrose synthase 1 (SH-1) (Zea mays (Maize)).